A 370-amino-acid chain; its full sequence is Pituitary-specific positive transcription factor 1 (370 aa).

A 9aaTAD motif is present at residues 5–13 (AFASSDNFV). The POU-specific domain occupies 202-276 (MDSPEIRELE…ILSKWLEEAE (75 aa)). A DNA-binding region (homeobox) is located at residues 292-351 (KRKRRTTISIAAKEALERHFGEQSKPSSQEIMRMAEGLNLEKEVVRVWFCNRRQREKRVK).

The protein belongs to the POU transcription factor family. Class-1 subfamily. Pituitary gland.

It is found in the nucleus. Functionally, transcription factor that activates growth hormone and prolactin genes. Specifically binds to the consensus sequence 5'-TAAAT-3'. This chain is Pituitary-specific positive transcription factor 1 (POU1F1), found in Meleagris gallopavo (Wild turkey).